The sequence spans 263 residues: Glucosamine-6-phosphate deaminase 2 (263 aa).

The active-site Proton acceptor; for enolization step is the Asp-82. Asn-151 functions as the For ring-opening step in the catalytic mechanism. The active-site Proton acceptor; for ring-opening step is the His-153. The active-site For ring-opening step is Glu-158.

Belongs to the glucosamine/galactosamine-6-phosphate isomerase family. Homohexamer.

It catalyses the reaction alpha-D-glucosamine 6-phosphate + H2O = beta-D-fructose 6-phosphate + NH4(+). Its function is as follows. Catalyzes the reversible conversion of alpha-D-glucosamine 6-phosphate (GlcN-6P) into beta-D-fructose 6-phosphate (Fru-6P) and ammonium ion, a regulatory reaction step in de novo uridine diphosphate-N-acetyl-alpha-D-glucosamine (UDP-GlcNAc) biosynthesis via hexosamine pathway. The chain is Glucosamine-6-phosphate deaminase 2 (GPI2) from Giardia intestinalis (Giardia lamblia).